The following is a 142-amino-acid chain: NCT transcriptional regulatory complex subunit B (142 aa).

This sequence belongs to the NC2 beta/DR1 family. As to quaternary structure, forms the NCT transcriptional regulatory complex with nctA and mot1.

Its subcellular location is the nucleus. Its function is as follows. Part of the NCT transcriptional regulatory complex that acts as a key regulator of ergosterol biosynthesis and the azole exporter cdr1B. The NCT complex binds the promoters of genes linked to azole susceptibility, and especially represses the expression of cdr1B transporter. The sequence is that of NCT transcriptional regulatory complex subunit B from Aspergillus fumigatus (strain CBS 144.89 / FGSC A1163 / CEA10) (Neosartorya fumigata).